We begin with the raw amino-acid sequence, 166 residues long: Putative membrane protein 164 (166 aa).

Residues 1 to 4 are Intravirion-facing; that stretch reads MYHP. The chain crosses the membrane as a helical span at residues 5–25; sequence VVQVLIGLILVIILILGFYHL. Residues 26–166 are Virion surface-facing; sequence KKKSCKTDTD…TIMGIARNIL (141 aa).

This sequence belongs to the asfivirus envelope protein p22 family.

Its subcellular location is the virion membrane. It is found in the host cell membrane. This Ornithodoros (relapsing fever ticks) protein is Putative membrane protein 164.